A 124-amino-acid polypeptide reads, in one-letter code: Large ribosomal subunit protein uL18 (124 aa).

This sequence belongs to the universal ribosomal protein uL18 family. In terms of assembly, part of the 50S ribosomal subunit; part of the 5S rRNA/L5/L18/L25 subcomplex. Contacts the 5S and 23S rRNAs.

In terms of biological role, this is one of the proteins that bind and probably mediate the attachment of the 5S RNA into the large ribosomal subunit, where it forms part of the central protuberance. This chain is Large ribosomal subunit protein uL18, found in Desulfosudis oleivorans (strain DSM 6200 / JCM 39069 / Hxd3) (Desulfococcus oleovorans).